A 1732-amino-acid polypeptide reads, in one-letter code: Transient receptor potential cation channel subfamily M member 3 (1732 aa).

The Cytoplasmic portion of the chain corresponds to 1–894 (MPEPWGTVYF…RKIYEFYNAP (894 aa)). 4 calmodulin-binding regions span residues 192 to 215 (NFEL…MTTG), 300 to 323 (TGKY…QKIN), 601 to 624 (RKRF…KLLG), and 793 to 816 (RKNS…LEFK). A required for the inhibitory action of G-beta/gamma-subunits of heterotrimeric G-proteins region spans residues 617-625 (PKALKLLGM). Serine 796 serves as a coordination point for 1,2-dioctanoyl-sn-glycero-3-phospho-(1D-myo-inositol-4,5-bisphosphate). A helical transmembrane segment spans residues 895–918 (IVKFWFYTLAYIGYLMLFNYIVLV). The Extracellular portion of the chain corresponds to 919-925 (KMERWPS). The helical transmembrane segment at 926–948 (TQEWIVISYIFTLGIEKMREILM) threads the bilayer. At 949–964 (SEPGKLLQKVKVWLQE) the chain is on the cytoplasmic side. The chain crosses the membrane as a helical span at residues 965–985 (YWNVTDLIAILLFSVGMILRL). Topologically, residues 986–989 (QDQP) are extracellular. Residues 990–1013 (FRSDGRVIYCVNIIYWYIRLLDIF) traverse the membrane as a helical segment. Topologically, residues 1014–1028 (GVNKYLGPYVMMIGK) are cytoplasmic. Residues lysine 1017 and tyrosine 1018 each contribute to the 1,2-dioctanoyl-sn-glycero-3-phospho-(1D-myo-inositol-4,5-bisphosphate) site. The helical transmembrane segment at 1029-1056 (MMIDMMYFVIIMLVVLMSFGVARQAILF) threads the bilayer. Residues 1057-1111 (PNEEPSWKLAKNIFYMPYWMIYGEVFADQIDPPCGQNETREDGKIIQLPPCKTGA) are Extracellular-facing. A helical transmembrane segment spans residues 1112–1137 (WIVPAIMACYLLVANILLVNLLIAVF). At 1138 to 1732 (NNTFFEVKSI…AFQSFESKHN (595 aa)) the chain is on the cytoplasmic side. Residues 1241-1301 (ERIRVTSERV…LERLTGLERA (61 aa)) adopt a coiled-coil conformation. Over residues 1459–1476 (PVPSTAPSSSAYATLAPT) the composition is skewed to low complexity. Disordered stretches follow at residues 1459-1478 (PVPS…PTDR) and 1611-1732 (REAE…SKHN). Composition is skewed to polar residues over residues 1635–1653 (AISS…NNIT), 1690–1701 (NTASLRNPFQRS), and 1720–1732 (RTSA…SKHN).

It belongs to the transient receptor (TC 1.A.4) family. LTrpC subfamily. TRPM3 sub-subfamily. Homotetramer. Interacts with TRPM1; the interaction results in the formation of a heteromultimeric cation channel complex that are functionally different from the homomeric channels. As to expression, expressed primarily in the kidney and, at lower levels, in brain, testis, ovary, pancreas and spinal cord. Expression in the brain and kidney was determined at protein level. In the kidney, expressed predominantly in the collecting tubular epithelium in the medulla, medullary rays, and periglomerular regions; in the brain, highest levels are found in the cerebellum, choroid plexus, the locus coeruleus, the posterior thalamus and the substantia nigra. Down-regulated in renal tumors compared to normal kidney. Expressed in the lens.

It localises to the cell membrane. It carries out the reaction Ca(2+)(in) = Ca(2+)(out). It catalyses the reaction Mn(2+)(in) = Mn(2+)(out). The enzyme catalyses Zn(2+)(in) = Zn(2+)(out). The catalysed reaction is Mg(2+)(in) = Mg(2+)(out). Its activity is regulated as follows. Activated by the neurosteroid pregnelonone sulfate (PregS); PregS activates the channel by shifting its current-voltage activation curve toward more negative membrane potentials and also potentiates temperature-induced activation. Activated by sphingosine. Activated by heat. Intracellular Ca(2+) inhibits TRPM3 probably via interaction with Ca(2+)/calmodulin. Intracellular Mg(2+) inhibits TRPM3 activity. Both intracellular and extracellular protons block TRPM3 through propable binding sites in the pore region. Positively regulated by phosphoinositide phosphoinositol 4,5-biphosphate (PI(4,5)P2). Strongly inhibited by activation of G(i)-coupled receptors via direct binding with G-betagamma-subunits of heterotrimeric G-proteins. Its function is as follows. Constitutively active, non-selective divalent cation-conducting channel that is permeable to Ca(2+), Mn(2+), and Mg(2+), with a high permeability for Ca(2+). However, can be enhanced by increasing temperature and by ligands, including the endogenous neurosteroid pregnenolone sulfate and sphingosine-1 and suppressed by intracellular Mg(2+). Implicated in a variety of cellular processes, including insulin/peptide secretion, vascular constriction and dilation, noxious heat sensing, inflammatory and spontaneous pain sensitivity. In neurons of the dorsal root ganglia, functions as thermosensitive channel for the detection of noxious heat and spontaneous pain. Suggested to function as an ionotropic steroid receptor in beta-cell, indeed pregnenolone sulfate leads to Ca(2+) influx and enhanced insulin secretion. Mediates Zn(2+) uptake into the lumen of pancreatic beta cell secretory granules, thereby regulating insulin secretion. Forms heteromultimeric ion channels with TRPM1 which are permeable for Ca(2+) and Zn(2+) ions. Exists as multiple splice variants which differ significantly in their biophysical properties. The protein is Transient receptor potential cation channel subfamily M member 3 of Homo sapiens (Human).